Consider the following 258-residue polypeptide: Myogenic factor 5 (258 aa).

Positions 21-50 (LSSPEGEFPEDFEPRELPPFGAPAPTEPAC) are disordered. Positions 85–136 (DRRKAATMRERRRLKKVNQAFETLKRCTTANPNQRLPKVEILRNAIRYIESL) constitute a bHLH domain. The segment at 220–258 (AEEPGLPLRHAGSLSPGASIDSGPGTPGSPPPRRTYQAL) is disordered.

In terms of assembly, efficient DNA binding requires dimerization with another bHLH protein.

It is found in the nucleus. Functionally, acts as a transcriptional activator that promotes transcription of muscle-specific target genes and plays a role in muscle differentiation. Induces fibroblasts to differentiate into myoblasts. Probable sequence specific DNA-binding protein. The chain is Myogenic factor 5 (MYF5) from Gallus gallus (Chicken).